The following is a 245-amino-acid chain: 1-(5-phosphoribosyl)-5-[(5-phosphoribosylamino)methylideneamino] imidazole-4-carboxamide isomerase (245 aa).

The active-site Proton acceptor is the aspartate 7. The active-site Proton donor is aspartate 129.

This sequence belongs to the HisA/HisF family.

The protein resides in the cytoplasm. It catalyses the reaction 1-(5-phospho-beta-D-ribosyl)-5-[(5-phospho-beta-D-ribosylamino)methylideneamino]imidazole-4-carboxamide = 5-[(5-phospho-1-deoxy-D-ribulos-1-ylimino)methylamino]-1-(5-phospho-beta-D-ribosyl)imidazole-4-carboxamide. It participates in amino-acid biosynthesis; L-histidine biosynthesis; L-histidine from 5-phospho-alpha-D-ribose 1-diphosphate: step 4/9. The protein is 1-(5-phosphoribosyl)-5-[(5-phosphoribosylamino)methylideneamino] imidazole-4-carboxamide isomerase of Shewanella baltica (strain OS195).